Consider the following 127-residue polypeptide: Probable glycine cleavage system H protein (127 aa).

The Lipoyl-binding domain maps to 24-106 (TAEVGITAFA…FGDGWMLTVE (83 aa)). K65 is modified (N6-lipoyllysine).

Belongs to the GcvH family. The glycine cleavage system is composed of four proteins: P, T, L and H. Requires (R)-lipoate as cofactor.

In terms of biological role, the glycine cleavage system catalyzes the degradation of glycine. The H protein shuttles the methylamine group of glycine from the P protein to the T protein. The polypeptide is Probable glycine cleavage system H protein (Haloarcula marismortui (strain ATCC 43049 / DSM 3752 / JCM 8966 / VKM B-1809) (Halobacterium marismortui)).